Consider the following 299-residue polypeptide: dTDP-4-dehydrorhamnose reductase (299 aa).

Residues Gly-10–Val-12, Asp-30, Asp-39–Phe-40, and Ala-63–Thr-65 each bind NADH. Gln-11–Val-12 contributes to the NADPH binding site. NADPH is bound by residues Asp-39 to Phe-40, Ala-63 to Thr-65, and Tyr-102. Thr-104–Asp-105 is a binding site for dTDP-beta-L-rhamnose. Residues Tyr-128 and Lys-132 each coordinate NADH. NADPH is bound by residues Tyr-128 and Lys-132. Tyr-128 serves as the catalytic Proton donor/acceptor. DTDP-beta-L-rhamnose is bound at residue Trp-153.

The protein belongs to the dTDP-4-dehydrorhamnose reductase family. In terms of assembly, homodimer. Mg(2+) is required as a cofactor.

It catalyses the reaction dTDP-beta-L-rhamnose + NADP(+) = dTDP-4-dehydro-beta-L-rhamnose + NADPH + H(+). It functions in the pathway carbohydrate biosynthesis; dTDP-L-rhamnose biosynthesis. The protein operates within bacterial outer membrane biogenesis; LPS O-antigen biosynthesis. Involved in the biosynthesis of the dTDP-L-rhamnose which is an important component of lipopolysaccharide (LPS). Catalyzes the reduction of dTDP-6-deoxy-L-lyxo-4-hexulose to yield dTDP-L-rhamnose. RmlD uses NADH and NADPH nearly equally well. This is dTDP-4-dehydrorhamnose reductase from Escherichia coli (strain K12).